The primary structure comprises 211 residues: Urease accessory protein UreG (211 aa).

Gly-12 to Thr-19 serves as a coordination point for GTP.

The protein belongs to the SIMIBI class G3E GTPase family. UreG subfamily. As to quaternary structure, homodimer. UreD, UreF and UreG form a complex that acts as a GTP-hydrolysis-dependent molecular chaperone, activating the urease apoprotein by helping to assemble the nickel containing metallocenter of UreC. The UreE protein probably delivers the nickel.

The protein localises to the cytoplasm. Functionally, facilitates the functional incorporation of the urease nickel metallocenter. This process requires GTP hydrolysis, probably effectuated by UreG. This is Urease accessory protein UreG from Paracoccus denitrificans (strain Pd 1222).